The primary structure comprises 370 residues: Holliday junction branch migration complex subunit RuvB (370 aa).

A large ATPase domain (RuvB-L) region spans residues 1 to 182 (MDERMMTSAK…FGVIHRLEYY (182 aa)). ATP is bound by residues leucine 21, arginine 22, glycine 63, lysine 66, threonine 67, threonine 68, 129–131 (EDF), arginine 172, tyrosine 182, and arginine 219. Position 67 (threonine 67) interacts with Mg(2+). Residues 183–253 (RPDELEFIIL…VAREALRRLE (71 aa)) are small ATPAse domain (RuvB-S). The tract at residues 256–370 (PRGLDTTDQR…AEQAALSFDE (115 aa)) is head domain (RuvB-H). DNA-binding residues include arginine 311 and arginine 316.

This sequence belongs to the RuvB family. As to quaternary structure, homohexamer. Forms an RuvA(8)-RuvB(12)-Holliday junction (HJ) complex. HJ DNA is sandwiched between 2 RuvA tetramers; dsDNA enters through RuvA and exits via RuvB. An RuvB hexamer assembles on each DNA strand where it exits the tetramer. Each RuvB hexamer is contacted by two RuvA subunits (via domain III) on 2 adjacent RuvB subunits; this complex drives branch migration. In the full resolvosome a probable DNA-RuvA(4)-RuvB(12)-RuvC(2) complex forms which resolves the HJ.

It localises to the cytoplasm. It catalyses the reaction ATP + H2O = ADP + phosphate + H(+). In terms of biological role, the RuvA-RuvB-RuvC complex processes Holliday junction (HJ) DNA during genetic recombination and DNA repair, while the RuvA-RuvB complex plays an important role in the rescue of blocked DNA replication forks via replication fork reversal (RFR). RuvA specifically binds to HJ cruciform DNA, conferring on it an open structure. The RuvB hexamer acts as an ATP-dependent pump, pulling dsDNA into and through the RuvAB complex. RuvB forms 2 homohexamers on either side of HJ DNA bound by 1 or 2 RuvA tetramers; 4 subunits per hexamer contact DNA at a time. Coordinated motions by a converter formed by DNA-disengaged RuvB subunits stimulates ATP hydrolysis and nucleotide exchange. Immobilization of the converter enables RuvB to convert the ATP-contained energy into a lever motion, pulling 2 nucleotides of DNA out of the RuvA tetramer per ATP hydrolyzed, thus driving DNA branch migration. The RuvB motors rotate together with the DNA substrate, which together with the progressing nucleotide cycle form the mechanistic basis for DNA recombination by continuous HJ branch migration. Branch migration allows RuvC to scan DNA until it finds its consensus sequence, where it cleaves and resolves cruciform DNA. This Heliobacterium modesticaldum (strain ATCC 51547 / Ice1) protein is Holliday junction branch migration complex subunit RuvB.